Consider the following 339-residue polypeptide: UDP-N-acetylenolpyruvoylglucosamine reductase (339 aa).

One can recognise an FAD-binding PCMH-type domain in the interval 19–189; that stretch reads VDVQARLFAE…LRVRFKLSRV (171 aa). R166 is an active-site residue. Catalysis depends on S239, which acts as the Proton donor. E335 is an active-site residue.

This sequence belongs to the MurB family. The cofactor is FAD.

The protein resides in the cytoplasm. It catalyses the reaction UDP-N-acetyl-alpha-D-muramate + NADP(+) = UDP-N-acetyl-3-O-(1-carboxyvinyl)-alpha-D-glucosamine + NADPH + H(+). Its pathway is cell wall biogenesis; peptidoglycan biosynthesis. Cell wall formation. This chain is UDP-N-acetylenolpyruvoylglucosamine reductase, found in Pseudomonas savastanoi pv. phaseolicola (strain 1448A / Race 6) (Pseudomonas syringae pv. phaseolicola (strain 1448A / Race 6)).